We begin with the raw amino-acid sequence, 163 residues long: Type-1 angiotensin II receptor-associated protein-like (163 aa).

Residues 1–28 (MELPAVNLKAIVFTHWLLTVFACMIDWL) are Extracellular-facing. A helical membrane pass occupies residues 29–49 (PKAYGLANITILAMGVWAIAQ). Topologically, residues 50–55 (RDSIDA) are cytoplasmic. The helical transmembrane segment at 56 to 76 (IFMFLIGLLLTILTDILLFAL) threads the bilayer. Topologically, residues 77-95 (YFTEAEKASESGPLRDLFR) are extracellular. The helical transmembrane segment at 96–116 (FSSGMGIFSLLLKPLSCFFMY) threads the bilayer. The Cytoplasmic portion of the chain corresponds to 117–163 (HMYRERGGEYFVNLGFITLSRDRSSYQSIEHMDPPADQDNKLPSRTY).

It is found in the membrane. Functionally, appears to be a negative regulator of angiotensin II type I receptor-mediated signaling. This chain is Type-1 angiotensin II receptor-associated protein-like (agtrap), found in Xenopus tropicalis (Western clawed frog).